The chain runs to 258 residues: Hemin import ATP-binding protein HmuV (258 aa).

Residues methionine 1–proline 238 form the ABC transporter domain. Glycine 34–serine 41 contributes to the ATP binding site.

This sequence belongs to the ABC transporter superfamily. Heme (hemin) importer (TC 3.A.1.14.5) family. As to quaternary structure, the complex is composed of two ATP-binding proteins (HmuV), two transmembrane proteins (HmuU) and a solute-binding protein (HmuT).

Its subcellular location is the cell inner membrane. Part of the ABC transporter complex HmuTUV involved in hemin import. Responsible for energy coupling to the transport system. The sequence is that of Hemin import ATP-binding protein HmuV from Idiomarina loihiensis (strain ATCC BAA-735 / DSM 15497 / L2-TR).